A 254-amino-acid chain; its full sequence is Imidazole glycerol phosphate synthase subunit HisF (254 aa).

Residues Asp12 and Asp131 contribute to the active site.

This sequence belongs to the HisA/HisF family. Heterodimer of HisH and HisF.

It localises to the cytoplasm. The enzyme catalyses 5-[(5-phospho-1-deoxy-D-ribulos-1-ylimino)methylamino]-1-(5-phospho-beta-D-ribosyl)imidazole-4-carboxamide + L-glutamine = D-erythro-1-(imidazol-4-yl)glycerol 3-phosphate + 5-amino-1-(5-phospho-beta-D-ribosyl)imidazole-4-carboxamide + L-glutamate + H(+). The protein operates within amino-acid biosynthesis; L-histidine biosynthesis; L-histidine from 5-phospho-alpha-D-ribose 1-diphosphate: step 5/9. Its function is as follows. IGPS catalyzes the conversion of PRFAR and glutamine to IGP, AICAR and glutamate. The HisF subunit catalyzes the cyclization activity that produces IGP and AICAR from PRFAR using the ammonia provided by the HisH subunit. This is Imidazole glycerol phosphate synthase subunit HisF from Janthinobacterium sp. (strain Marseille) (Minibacterium massiliensis).